Here is a 292-residue protein sequence, read N- to C-terminus: GTP cyclohydrolase FolE2 (292 aa).

It belongs to the GTP cyclohydrolase IV family.

It carries out the reaction GTP + H2O = 7,8-dihydroneopterin 3'-triphosphate + formate + H(+). It functions in the pathway cofactor biosynthesis; 7,8-dihydroneopterin triphosphate biosynthesis; 7,8-dihydroneopterin triphosphate from GTP: step 1/1. In terms of biological role, converts GTP to 7,8-dihydroneopterin triphosphate. The polypeptide is GTP cyclohydrolase FolE2 (Macrococcus caseolyticus (strain JCSC5402) (Macrococcoides caseolyticum)).